A 205-amino-acid polypeptide reads, in one-letter code: Small ribosomal subunit protein uS4 (205 aa).

In terms of domain architecture, S4 RNA-binding spans 95-156; the sequence is SRLDNIVYRM…KTIKIPIVKA (62 aa).

This sequence belongs to the universal ribosomal protein uS4 family. In terms of assembly, part of the 30S ribosomal subunit. Contacts protein S5. The interaction surface between S4 and S5 is involved in control of translational fidelity.

Functionally, one of the primary rRNA binding proteins, it binds directly to 16S rRNA where it nucleates assembly of the body of the 30S subunit. With S5 and S12 plays an important role in translational accuracy. In Mycoplasma pneumoniae (strain ATCC 29342 / M129 / Subtype 1) (Mycoplasmoides pneumoniae), this protein is Small ribosomal subunit protein uS4.